Reading from the N-terminus, the 162-residue chain is Ribosome maturation factor RimP (162 aa).

This sequence belongs to the RimP family.

The protein resides in the cytoplasm. Required for maturation of 30S ribosomal subunits. This chain is Ribosome maturation factor RimP, found in Ralstonia pickettii (strain 12J).